Here is a 147-residue protein sequence, read N- to C-terminus: Prefoldin subunit alpha (147 aa).

This sequence belongs to the prefoldin alpha subunit family. In terms of assembly, heterohexamer of two alpha and four beta subunits.

The protein resides in the cytoplasm. Functionally, molecular chaperone capable of stabilizing a range of proteins. Seems to fulfill an ATP-independent, HSP70-like function in archaeal de novo protein folding. The sequence is that of Prefoldin subunit alpha from Saccharolobus islandicus (strain L.S.2.15 / Lassen #1) (Sulfolobus islandicus).